We begin with the raw amino-acid sequence, 370 residues long: Lysophosphatidic acid receptor 4 (370 aa).

The Extracellular segment spans residues 1–43 (MGDRRFIDFQFQDLNSSLRPRLGNATANNTCIVDDSFKYNLNG). 3 N-linked (GlcNAc...) asparagine glycosylation sites follow: Asn15, Asn24, and Asn28. A helical membrane pass occupies residues 44–64 (AVYSVVFILGLITNSASLFVF). The Cytoplasmic segment spans residues 65-73 (CFRMKMRSE). Residues 74–94 (TAIFITNLALSDLLFVCTLPF) form a helical membrane-spanning segment. At 95-112 (KIFYNFNRHWPFGDTLCK) the chain is on the extracellular side. Cys111 and Cys188 form a disulfide bridge. A helical transmembrane segment spans residues 113–133 (ISGTAFLTNIYGSMLFLTCIS). The Cytoplasmic portion of the chain corresponds to 134–155 (VDRFLAIVYPFRSRTIRTRRNS). Residues 156-176 (AIVCAGVWILVLSGGISASLF) form a helical membrane-spanning segment. Residues 177-203 (STTNVNNATTTCFEGFSKRVWKTYLSK) lie on the Extracellular side of the membrane. Asn183 carries an N-linked (GlcNAc...) asparagine glycan. A helical transmembrane segment spans residues 204–224 (ITIFIEVVGFIIPLILNVSCS). Residues 225 to 254 (SVVLRTLRKPATLSQIGTNKKKVLKMITVH) are Cytoplasmic-facing. A helical membrane pass occupies residues 255 to 275 (MAVFVVCFVPYNSVLFLYALV). Residues 276-294 (RSQAITNCLLERFAKIMYP) are Extracellular-facing. A helical transmembrane segment spans residues 295-315 (ITLCLATLNCCFDPFIYYFTL). Residues 316 to 370 (ESFQKSFYINTHIRMESLFKTETPLTPKPSLPAIQEEVSDQTTNNGGELMLESTF) lie on the Cytoplasmic side of the membrane.

It belongs to the G-protein coupled receptor 1 family.

The protein resides in the cell membrane. In terms of biological role, receptor for lysophosphatidic acid (LPA), a mediator of diverse cellular activities. Transduces a signal by increasing the intracellular calcium ions and by stimulating adenylyl cyclase activity. The rank order of potency for agonists of this receptor is 1-oleoyl- &gt; 1-stearoyl- &gt; 1-palmitoyl- &gt; 1-myristoyl- &gt; 1-alkyl- &gt; 1-alkenyl-LPA. This chain is Lysophosphatidic acid receptor 4 (Lpar4), found in Mus musculus (Mouse).